Here is a 196-residue protein sequence, read N- to C-terminus: Pyridoxal 5'-phosphate synthase subunit PdxT (196 aa).

52 to 54 serves as a coordination point for L-glutamine; it reads GES. Catalysis depends on cysteine 84, which acts as the Nucleophile. L-glutamine-binding positions include arginine 113 and 141-142; that span reads IR. Active-site charge relay system residues include histidine 178 and glutamate 180.

Belongs to the glutaminase PdxT/SNO family. In the presence of PdxS, forms a dodecamer of heterodimers. Only shows activity in the heterodimer.

The enzyme catalyses aldehydo-D-ribose 5-phosphate + D-glyceraldehyde 3-phosphate + L-glutamine = pyridoxal 5'-phosphate + L-glutamate + phosphate + 3 H2O + H(+). It catalyses the reaction L-glutamine + H2O = L-glutamate + NH4(+). It functions in the pathway cofactor biosynthesis; pyridoxal 5'-phosphate biosynthesis. Functionally, catalyzes the hydrolysis of glutamine to glutamate and ammonia as part of the biosynthesis of pyridoxal 5'-phosphate. The resulting ammonia molecule is channeled to the active site of PdxS. The sequence is that of Pyridoxal 5'-phosphate synthase subunit PdxT from Pyrococcus abyssi (strain GE5 / Orsay).